The chain runs to 179 residues: Large ribosomal subunit protein bL25 (179 aa).

This sequence belongs to the bacterial ribosomal protein bL25 family. CTC subfamily. As to quaternary structure, part of the 50S ribosomal subunit; part of the 5S rRNA/L5/L18/L25 subcomplex. Contacts the 5S rRNA. Binds to the 5S rRNA independently of L5 and L18.

In terms of biological role, this is one of the proteins that binds to the 5S RNA in the ribosome where it forms part of the central protuberance. The polypeptide is Large ribosomal subunit protein bL25 (Desulfitobacterium hafniense (strain DSM 10664 / DCB-2)).